A 321-amino-acid polypeptide reads, in one-letter code: uncharacterized protein (321 aa).

The next 9 membrane-spanning stretches (helical) occupy residues 12 to 32 (IGVEFIIFSVYAVFSISWAAT), 52 to 72 (LITSMIVVAKIFGASFTAFLV), 86 to 106 (ILMSSGIFLSFVDSYSGILII), 109 to 129 (LTGLGSACALVCLVPIAQQWF), 136 to 156 (FVISFNITSNLVGITLGLVLA), 168 to 188 (DSLSFYAWINLILLILWLFVG), 214 to 234 (WGMIIFYIGPILFLNSLFTFL), 254 to 274 (KEIPALANFAIIFGPYLGLFF), and 292 to 312 (IFICGFCMLFLQNLVLIQIFA).

The protein localises to the cell membrane. This is an uncharacterized protein from Campylobacter jejuni subsp. jejuni serotype O:2 (strain ATCC 700819 / NCTC 11168).